Reading from the N-terminus, the 412-residue chain is MPIMGSSVYITVELAIAVLAILGNVLVCWAVWLNSNLQNVTNYFVVSLAAADIAVGVLAIPFAITISTGFCAACHGCLFIACFVLVLTQSSIFSLLAIAIDRYIAIRIPLRYNGLVTGTRAKGIIAICWVLSFAIGLTPMLGWNNCGQPKEGKNHSQGCGEGQVACLFEDVVPMNYMVYFNFFACVLVPLLLMLGVYLRIFLAARRQLKQMESQPLPGERARSTLQKEVHAAKSLAIIVGLFALCWLPLHIINCFTFFCPDCSHAPLWLMYLAIVLSHTNSVVNPFIYAYRIREFRQTFRKIIRSHVLRQQEPFKAAGTSARVLAAHGSDGEQVSLRLNGHPPGVWANGSAPHPERRPNGYALGLVSGGSAQESQGNTGLPDVELLSHELKGVCPEPPGLDDPLAQDGAGVS.

The Extracellular portion of the chain corresponds to 1-7 (MPIMGSS). The chain crosses the membrane as a helical span at residues 8–32 (VYITVELAIAVLAILGNVLVCWAVW). Topologically, residues 33-42 (LNSNLQNVTN) are cytoplasmic. Residues 43-66 (YFVVSLAAADIAVGVLAIPFAITI) form a helical membrane-spanning segment. Residues 67-77 (STGFCAACHGC) lie on the Extracellular side of the membrane. Disulfide bonds link Cys71/Cys159, Cys74/Cys146, and Cys77/Cys166. Residues 78-100 (LFIACFVLVLTQSSIFSLLAIAI) form a helical membrane-spanning segment. Topologically, residues 101-120 (DRYIAIRIPLRYNGLVTGTR) are cytoplasmic. A helical membrane pass occupies residues 121 to 143 (AKGIIAICWVLSFAIGLTPMLGW). Over 144–173 (NNCGQPKEGKNHSQGCGEGQVACLFEDVVP) the chain is Extracellular. An N-linked (GlcNAc...) asparagine glycan is attached at Asn154. An adenosine-binding site is contributed by Glu169. A helical membrane pass occupies residues 174–198 (MNYMVYFNFFACVLVPLLLMLGVYL). The Cytoplasmic segment spans residues 199 to 234 (RIFLAARRQLKQMESQPLPGERARSTLQKEVHAAKS). A helical membrane pass occupies residues 235 to 258 (LAIIVGLFALCWLPLHIINCFTFF). Position 253 (Asn253) interacts with adenosine. Cys259 and Cys262 are joined by a disulfide. The Extracellular portion of the chain corresponds to 259 to 266 (CPDCSHAP). Residues 267–290 (LWLMYLAIVLSHTNSVVNPFIYAY) traverse the membrane as a helical segment. Ser277 and His278 together coordinate adenosine. The Cytoplasmic segment spans residues 291–412 (RIREFRQTFR…PLAQDGAGVS (122 aa)). Residues 391–412 (KGVCPEPPGLDDPLAQDGAGVS) are disordered.

It belongs to the G-protein coupled receptor 1 family. In terms of assembly, interacts (via cytoplasmic C-terminal domain) with USP4; the interaction is direct. May interact with DRD4. Interacts with NECAB2. Interacts (via cytoplasmic C-terminal domain) with GAS2L2; interaction enhances receptor-mediated adenylyl cyclase activity. Post-translationally, ubiquitinated. Deubiquitinated by USP4; leading to stabilization and expression at the cell surface.

Its subcellular location is the cell membrane. In terms of biological role, receptor for adenosine. The activity of this receptor is mediated by G proteins which activate adenylyl cyclase. The chain is Adenosine receptor A2a (ADORA2A) from Homo sapiens (Human).